The chain runs to 897 residues: Major intrinsically disordered Notch2-binding receptor 1 (897 aa).

Residues 1–872 (MDAMPEYSLF…AEFRRAKACK (872 aa)) lie on the Cytoplasmic side of the membrane. Disordered regions lie at residues 405–433 (AKDK…SVAC), 450–502 (SINC…EDSE), and 688–766 (TRRS…PPKD). Polar residues-rich tracts occupy residues 411-423 (ASPS…SNGS) and 452-471 (NCPS…GTQT). A compositionally biased stretch (basic and acidic residues) spans 472–498 (EQHESRKVKDYPSQNKFKERPPFKHSE). Residues 697–724 (EENSATESKVASITNSPRDWRTVSYSSH) are compositionally biased toward polar residues. Over residues 725–756 (NGEEGKERDRHSEGKERHRKSREAERQYEAHQ) the composition is skewed to basic and acidic residues. Residues 873–893 (IGALIFAAACTVILVIVVPIC) traverse the membrane as a helical segment. Over 894 to 897 (TMKS) the chain is Extracellular.

The protein belongs to the MINAR family.

Its subcellular location is the cell membrane. Its function is as follows. Intrinsically disordered protein which may negatively regulate mTOR signaling pathway by stabilizing the mTOR complex component DEPTOR. Negatively regulates angiogenesis. Negatively regulates cell growth. May play a role in neuronal development. This Danio rerio (Zebrafish) protein is Major intrinsically disordered Notch2-binding receptor 1 (minar1).